Reading from the N-terminus, the 330-residue chain is Exostosin-like 2 (330 aa).

Topologically, residues 1–21 (MMRGCHICKLPGRVMGIRVLR) are cytoplasmic. The helical; Signal-anchor for type II membrane protein transmembrane segment at 22–42 (FSLVVILVLLLVAGALTNLLP) threads the bilayer. At 43–330 (NIKEDKMLTL…FPYANHKSKM (288 aa)) the chain is on the lumenal side. Gln72 provides a ligand contact to UDP-N-acetyl-alpha-D-galactosamine. Gln72 contributes to the UDP-N-acetyl-alpha-D-glucosamine binding site. N-linked (GlcNAc...) asparagine glycosylation is present at Asn75. UDP-N-acetyl-alpha-D-galactosamine is bound by residues Arg76, Asn101, Asn130, Arg135, Asp151, Asp152, Asp153, and Asp245. 10 residues coordinate UDP-N-acetyl-alpha-D-glucosamine: Arg76, Asn101, Asn130, Arg135, Asp151, Asp152, Asp153, Asp245, Asp246, and Arg293. Asp153 contributes to the Mn(2+) binding site. Cys244 and Cys296 are disulfide-bonded. Asp246 is an active-site residue. Arg293 lines the UDP-N-acetyl-alpha-D-galactosamine pocket.

Belongs to the glycosyltransferase 47 family. Mn(2+) serves as cofactor.

It localises to the endoplasmic reticulum membrane. It carries out the reaction 3-O-(beta-D-GlcA-(1-&gt;3)-beta-D-Gal-(1-&gt;3)-beta-D-Gal-(1-&gt;4)-beta-D-Xyl)-L-seryl-[protein] + UDP-N-acetyl-alpha-D-glucosamine = 3-O-(alpha-D-GlcNAc-(1-&gt;4)-beta-D-GlcA-(1-&gt;3)-beta-D-Gal-(1-&gt;3)-beta-D-Gal-(1-&gt;4)-beta-D-Xyl)-L-seryl-[protein] + UDP + H(+). In terms of biological role, glycosyltransferase required for the biosynthesis of heparan-sulfate and responsible for the alternating addition of beta-1-4-linked glucuronic acid (GlcA) and alpha-1-4-linked N-acetylglucosamine (GlcNAc) units to nascent heparan sulfate chains. In Mus musculus (Mouse), this protein is Exostosin-like 2 (Extl2).